The sequence spans 377 residues: Malate dehydrogenase, cytoplasmic (377 aa).

A Pro/N-degron motif is present at residues 2–5 (PHSV). Thr6 bears the Phosphothreonine mark. NAD(+) is bound by residues 20–26 (GAAGGIG) and Asp57. Substrate is bound by residues Arg106 and Arg112. NAD(+) contacts are provided by residues Asn119 and 144 to 146 (ISN). Substrate-binding residues include Asn146 and Arg185. The Proton acceptor role is filled by His215. Residue Met266 coordinates NAD(+).

This sequence belongs to the LDH/MDH superfamily. MDH type 1 family. As to quaternary structure, homodimer. Targeted for proteasomal degradation when cells are shifted to glucose-containing growth medium.

It localises to the cytoplasm. It carries out the reaction (S)-malate + NAD(+) = oxaloacetate + NADH + H(+). The isoenzyme MDH2 may function primarily in the glyoxylate cycle. The chain is Malate dehydrogenase, cytoplasmic (MDH2) from Saccharomyces cerevisiae (strain ATCC 204508 / S288c) (Baker's yeast).